The following is a 1331-amino-acid chain: MYADATHPRRACWCGAGGVSGCVRQRHAYRCSRLLAGVLLIVGALTLTLAVSTVPAAWAAGAVASSDEPVYLLNAMYSLSDYNAKHAKALWLGIDSALHAVGYTAARGRPIKIIEPDPTDDLSDIVAVVLKALKDYPTLLGVIGPYSDTRLGAVLISPEIQNSGLMFLGPFTGSSSMRAWNENLYFMRAEPRLEIMAMVKHIANTFRARRTAFMYLTGEQYGSFEHKSLVELMTSLSLDPPAVYSASYSTSTAVNMTAFDAMADTRPQVIIIWGIPAGQVEELLKVVLTDPRTSSAYIMPSFALQQMTFQVYYDLAMAGKLTPVDGQIISSATSFPLTEPASVHLRVFRAQMGEYMVKTGRVDASLWADEAKAVQQYGPWEHEASSSDSAAYVNNFFNEHPCVTQLMIAGWISGSLIAQTLAEENRIANRTAYRQYMFSQQRYIVGEDFVLGDYGGPCNGVAEFLGAVCYCNQGGHSAVLSRLDRAVWTVITESGVSFTQKNCYSDGTTLPRPLNFLTLIFAEHPLLAQVGLTFKTSISTLVAYLQYNASPVNAATVNVTDTTPQALHDAVTTNYTTDVVVGVTVKGMNVDGYLVPSPIHPRPHLVELLRNYVYLMPTLEQQMFVLYAKLSAVRGVTSIDSAVHMILHGYASDEVANITAVLRKSAATFNYDNPTVTAVPSTKTVGSALAHGQINFVLAVTAADVADIVDFLVEEKTSIVVIVFDDLVIQYPTLVTALKSKPASVQARVITFTNLPLWSDTSESAHAASKLLTVFHDALPDPSQHTPGFLSAVLTGSFCASMRRLADSVHSTSLTDMVYREGSVTTFAEPFGRFQWGCTTTPTDRFCVYHNYGAQGIVMLSVQRMLDPTVPQLSSPMTPTMDYRPRQRSHALTPAQRGGAIAGIALLTVILLAVAGLALYCCMDNRNNDAAPKDGDEPVTLLFTDIESSTALWAALPQLMSDAIAAHHRVIRQLVKKYGCYEVKTIGDSFMIACRSAHSAVSLACEIQTKLLKHDWGTEALDRAYREFELARVDTLDDYEPPTARLSEEEYAALWCGLRVRVGIHTGLTDIRYDEVTRGYDYYGDTSNMAARTEAVANGGQVVATEAAWWALSNDERAGIAHTAMGPQGLRGVPFAVEMFQLNAVPGRRHAALRTEIEAILPDDTATDTASSAAGALLSSVGTINGPAAGIAFVLASCFAPYPVAQRVRELQPLLSKWGVGAPPRSRLVSEEDYCQGLMNRLAIRIATVSQARCPVGNNGAAVDLDVQHAGTAEVMNPLLGEGSFISDGARARHSGLTAVPPSAEPSAMRMRRVGRKVPERPTVCNVRGAH.

At 1 to 33 the chain is on the cytoplasmic side; it reads MYADATHPRRACWCGAGGVSGCVRQRHAYRCSR. The helical transmembrane segment at 34–54 threads the bilayer; sequence LLAGVLLIVGALTLTLAVSTV. Residues 55 to 898 are Extracellular-facing; that stretch reads PAAWAAGAVA…SHALTPAQRG (844 aa). Residues asparagine 255, asparagine 429, asparagine 558, asparagine 574, and asparagine 657 are each glycosylated (N-linked (GlcNAc...) asparagine). Residues 899–919 traverse the membrane as a helical segment; that stretch reads GAIAGIALLTVILLAVAGLAL. The Cytoplasmic segment spans residues 920 to 1331; sequence YCCMDNRNND…PTVCNVRGAH (412 aa). The 155-residue stretch at 940–1094 folds into the Guanylate cyclase domain; the sequence is TLLFTDIESS…DTSNMAARTE (155 aa). Aspartate 945 and aspartate 988 together coordinate Mg(2+).

The protein belongs to the adenylyl cyclase class-3 family. It depends on Mg(2+) as a cofactor.

It localises to the membrane. The catalysed reaction is ATP = 3',5'-cyclic AMP + diphosphate. Its function is as follows. Could act as a receptor for an unknown ligand. The sequence is that of Receptor-type adenylate cyclase B (RAC-B) from Leishmania donovani.